Here is a 677-residue protein sequence, read N- to C-terminus: Methionine--tRNA ligase (677 aa).

Positions 15 to 25 (PYANGSIHLGH) match the 'HIGH' region motif. Zn(2+) contacts are provided by Cys146, Cys149, Cys159, and Cys162. A 'KMSKS' region motif is present at residues 333-337 (KMSKS). An ATP-binding site is contributed by Lys336. A tRNA-binding domain is found at 575–677 (DFAKIDLRVA…DGAKPGQQVK (103 aa)).

Belongs to the class-I aminoacyl-tRNA synthetase family. MetG type 1 subfamily. As to quaternary structure, homodimer. The cofactor is Zn(2+).

It is found in the cytoplasm. The enzyme catalyses tRNA(Met) + L-methionine + ATP = L-methionyl-tRNA(Met) + AMP + diphosphate. In terms of biological role, is required not only for elongation of protein synthesis but also for the initiation of all mRNA translation through initiator tRNA(fMet) aminoacylation. The protein is Methionine--tRNA ligase of Salmonella choleraesuis (strain SC-B67).